The chain runs to 443 residues: ATP-dependent protease ATPase subunit HslU (443 aa).

Residues I18 and 60–65 (GVGKTE) contribute to the ATP site. The tract at residues 141–165 (DQWGQNEENDTDSSTRQSFRKKLRE) is disordered. ATP is bound by residues D256, E321, and R393.

Belongs to the ClpX chaperone family. HslU subfamily. As to quaternary structure, a double ring-shaped homohexamer of HslV is capped on each side by a ring-shaped HslU homohexamer. The assembly of the HslU/HslV complex is dependent on binding of ATP.

It localises to the cytoplasm. In terms of biological role, ATPase subunit of a proteasome-like degradation complex; this subunit has chaperone activity. The binding of ATP and its subsequent hydrolysis by HslU are essential for unfolding of protein substrates subsequently hydrolyzed by HslV. HslU recognizes the N-terminal part of its protein substrates and unfolds these before they are guided to HslV for hydrolysis. In Photobacterium profundum (strain SS9), this protein is ATP-dependent protease ATPase subunit HslU.